The chain runs to 184 residues: GTP cyclohydrolase 1 (184 aa).

Zn(2+) contacts are provided by Cys-75, His-78, and Cys-146.

The protein belongs to the GTP cyclohydrolase I family. In terms of assembly, homomer.

It catalyses the reaction GTP + H2O = 7,8-dihydroneopterin 3'-triphosphate + formate + H(+). Its pathway is cofactor biosynthesis; 7,8-dihydroneopterin triphosphate biosynthesis; 7,8-dihydroneopterin triphosphate from GTP: step 1/1. The polypeptide is GTP cyclohydrolase 1 (Streptococcus pneumoniae (strain Hungary19A-6)).